Consider the following 154-residue polypeptide: MSLIPRIFGDRRSTSVFDPFSIDVFDPFKELGFTVSNSGETSAFANTRIDWKETPEAHVFKADLPGLKKEEVKVEVEEDRVLQISGERNVEKEDKNDTWHRVERSSGKFMRRFRLPENAKMDQVKASMENGVLTVTVPKEEVNNPDVKSIEISG.

One can recognise a sHSP domain in the interval 40–154; it reads ETSAFANTRI…PDVKSIEISG (115 aa).

It belongs to the small heat shock protein (HSP20) family. In terms of assembly, forms oligomeric structures.

It localises to the cytoplasm. In Solanum peruvianum (Peruvian tomato), this protein is 17.6 kDa class I heat shock protein.